We begin with the raw amino-acid sequence, 385 residues long: Alanine racemase (385 aa).

Catalysis depends on Lys-40, which acts as the Proton acceptor; specific for D-alanine. Lys-40 is modified (N6-(pyridoxal phosphate)lysine). Residue Arg-139 participates in substrate binding. Tyr-268 (proton acceptor; specific for L-alanine) is an active-site residue. Met-315 provides a ligand contact to substrate.

This sequence belongs to the alanine racemase family. Requires pyridoxal 5'-phosphate as cofactor.

The catalysed reaction is L-alanine = D-alanine. It participates in amino-acid biosynthesis; D-alanine biosynthesis; D-alanine from L-alanine: step 1/1. Catalyzes the interconversion of L-alanine and D-alanine. May also act on other amino acids. The polypeptide is Alanine racemase (alr) (Anoxybacillus flavithermus (strain DSM 21510 / WK1)).